A 471-amino-acid polypeptide reads, in one-letter code: Ribulose bisphosphate carboxylase large chain (471 aa).

Residues Asn-115 and Thr-165 each contribute to the substrate site. The Proton acceptor role is filled by Lys-167. Lys-169 provides a ligand contact to substrate. Lys-193, Asp-195, and Glu-196 together coordinate Mg(2+). Lys-193 carries the post-translational modification N6-carboxylysine. The Proton acceptor role is filled by His-286. 3 residues coordinate substrate: Arg-287, His-319, and Ser-371.

Belongs to the RuBisCO large chain family. Type I subfamily. Heterohexadecamer of 8 large chains and 8 small chains. Requires Mg(2+) as cofactor.

The protein resides in the carboxysome. The enzyme catalyses 2 (2R)-3-phosphoglycerate + 2 H(+) = D-ribulose 1,5-bisphosphate + CO2 + H2O. It catalyses the reaction D-ribulose 1,5-bisphosphate + O2 = 2-phosphoglycolate + (2R)-3-phosphoglycerate + 2 H(+). RuBisCO catalyzes two reactions: the carboxylation of D-ribulose 1,5-bisphosphate, the primary event in carbon dioxide fixation, as well as the oxidative fragmentation of the pentose substrate in the photorespiration process. Both reactions occur simultaneously and in competition at the same active site. The protein is Ribulose bisphosphate carboxylase large chain of Prochlorococcus marinus (strain MIT 9515).